The sequence spans 207 residues: Putative 3-methyladenine DNA glycosylase (207 aa).

It belongs to the DNA glycosylase MPG family.

This chain is Putative 3-methyladenine DNA glycosylase, found in Burkholderia cenocepacia (strain HI2424).